The primary structure comprises 291 residues: N-acetylmannosamine kinase (291 aa).

ATP contacts are provided by residues 5–12 and 132–139; these read AIDIGGTK and GVGGGVVS. 4 residues coordinate Zn(2+): His156, Cys166, Cys168, and Cys173.

Belongs to the ROK (NagC/XylR) family. NanK subfamily. In terms of assembly, homodimer.

The enzyme catalyses an N-acyl-D-mannosamine + ATP = an N-acyl-D-mannosamine 6-phosphate + ADP + H(+). It participates in amino-sugar metabolism; N-acetylneuraminate degradation; D-fructose 6-phosphate from N-acetylneuraminate: step 2/5. In terms of biological role, catalyzes the phosphorylation of N-acetylmannosamine (ManNAc) to ManNAc-6-P. The protein is N-acetylmannosamine kinase of Escherichia coli (strain ATCC 8739 / DSM 1576 / NBRC 3972 / NCIMB 8545 / WDCM 00012 / Crooks).